The chain runs to 182 residues: Inner membrane-spanning protein YciB (182 aa).

The next 5 membrane-spanning stretches (helical) occupy residues 22–42 (IYAATGALMATTLLQMIVVWV), 53–73 (ITLVLVLGFGAMTLFFHNEAF), 76–96 (WKVTVLYAAFGSALWISQFLF), 121–141 (FSWGLFFWMVGALNVYIAFYL), and 149–169 (FKVFGVLGLMLVSTLLTGIYI).

Belongs to the YciB family.

Its subcellular location is the cell inner membrane. Plays a role in cell envelope biogenesis, maintenance of cell envelope integrity and membrane homeostasis. The chain is Inner membrane-spanning protein YciB from Tolumonas auensis (strain DSM 9187 / NBRC 110442 / TA 4).